The sequence spans 698 residues: Nitric oxide-associated protein 1 (698 aa).

A disordered region spans residues 42-66 (FQHSSSLGRELPYDPVDTEGFGEGG). Phosphotyrosine is present on tyrosine 77. 2 disordered regions span residues 80 to 134 (DPEP…DPAL) and 279 to 306 (LAPGHQGPQRPVKDEPQDGENPNPPNWS). Basic and acidic residues predominate over residues 102-126 (ERQRQQRREERRQQNLRARSREHPV). Residues 202–503 (LELVSAALRR…FYDTPGITKE (302 aa)) form the CP-type G domain.

The protein belongs to the TRAFAC class YlqF/YawG GTPase family. NOA1 subfamily. In terms of assembly, homodimer or multimer. Interacts with mitochondrial complex I, DAP3, MRPL12 and MRPS27.

It localises to the mitochondrion inner membrane. Involved in regulation of mitochondrial protein translation and respiration. Plays a role in mitochondria-mediated cell death. May act as a scaffolding protein or stabilizer of respiratory chain supercomplexes. Binds GTP. The sequence is that of Nitric oxide-associated protein 1 (NOA1) from Homo sapiens (Human).